The primary structure comprises 64 residues: Small ribosomal subunit protein eS17 (64 aa).

Belongs to the eukaryotic ribosomal protein eS17 family.

The chain is Small ribosomal subunit protein eS17 from Halorubrum lacusprofundi (strain ATCC 49239 / DSM 5036 / JCM 8891 / ACAM 34).